The following is a 458-amino-acid chain: Paired box protein Pax-8 (458 aa).

Residues 18–144 (GHGGLNQLGG…SSINRIIRTK (127 aa)) constitute a DNA-binding region (paired). The segment at 21–77 (GLNQLGGAFVNGRPLPEVVRQRIVDLAHQGVRPCDISRQLRVSHGCVSKILGRYYET) is PAI subdomain. The RED subdomain stretch occupies residues 96–144 (KVVEKIGDYKRQNPTMFAWEIRDRLLAEGVCDNDTVPSVSSINRIIRTK). The interval 198 to 217 (PGADGKRKLDDSDQESCRLS) is disordered.

The protein resides in the nucleus. Probable transcription factor. Involved in kidney development, acting synergistically with lhx1/lim-1 to establish the pronephric primordium in late gastrulae/early neurulae. The polypeptide is Paired box protein Pax-8 (Xenopus tropicalis (Western clawed frog)).